The following is a 90-amino-acid chain: Conotoxin Mr22.1 (90 aa).

Positions 1–18 (MMTRVFFAMFFLMALTEG) are cleaved as a signal peptide. A propeptide spanning residues 19 to 49 (WPRLYDSDCVRGRNMHITCFKDQTCGLTVKR) is cleaved from the precursor. W75 carries the post-translational modification 6'-bromotryptophan.

It belongs to the E superfamily. Contains 4 disulfide bonds. As to expression, expressed by the venom duct.

It localises to the secreted. This is Conotoxin Mr22.1 from Conus marmoreus (Marble cone).